The following is a 422-amino-acid chain: Glycerol-3-phosphate dehydrogenase [NAD(+)] 2 (422 aa).

Residues 69 to 74 (GSGNWG), Phe157, Lys180, and Ala213 each bind NAD(+). Residue Lys180 coordinates substrate. Lys273 functions as the Proton acceptor in the catalytic mechanism. Residues Arg338 and Gln367 each coordinate NAD(+). 338–339 (RN) contributes to the substrate binding site.

The protein belongs to the NAD-dependent glycerol-3-phosphate dehydrogenase family.

It carries out the reaction sn-glycerol 3-phosphate + NAD(+) = dihydroxyacetone phosphate + NADH + H(+). The protein is Glycerol-3-phosphate dehydrogenase [NAD(+)] 2 (GPD2) of Candida glabrata (strain ATCC 2001 / BCRC 20586 / JCM 3761 / NBRC 0622 / NRRL Y-65 / CBS 138) (Yeast).